The chain runs to 429 residues: GTPase Obg (429 aa).

One can recognise an Obg domain in the interval 1–158 (MFVDQVKIYV…RNVQLELKVL (158 aa)). The interval 124 to 145 (RGNKRFATPANPAPELSENGEP) is disordered. Residues 159–329 (ADVGLVGFPS…LLLAIADKLE (171 aa)) form the OBG-type G domain. Residues 165–172 (GFPSVGKS), 190–194 (FTTIV), 212–215 (DLPG), 282–285 (NKMD), and 310–312 (SAV) contribute to the GTP site. S172 and T192 together coordinate Mg(2+). In terms of domain architecture, OCT spans 351 to 429 (KYVADEPDFE…LLDYEFEFMD (79 aa)).

The protein belongs to the TRAFAC class OBG-HflX-like GTPase superfamily. OBG GTPase family. Monomer. Mg(2+) is required as a cofactor.

The protein localises to the cytoplasm. Functionally, an essential GTPase which binds GTP, GDP and possibly (p)ppGpp with moderate affinity, with high nucleotide exchange rates and a fairly low GTP hydrolysis rate. Plays a role in control of the cell cycle, stress response, ribosome biogenesis and in those bacteria that undergo differentiation, in morphogenesis control. The chain is GTPase Obg from Listeria monocytogenes serotype 4a (strain HCC23).